The following is a 242-amino-acid chain: 3-dehydroquinate dehydratase (242 aa).

Residues 39 to 41 (EIR) and Arg73 contribute to the 3-dehydroquinate site. The Proton donor/acceptor role is filled by His135. Lys162 functions as the Schiff-base intermediate with substrate in the catalytic mechanism. Residues Arg203 and Gln228 each coordinate 3-dehydroquinate.

The protein belongs to the type-I 3-dehydroquinase family. Homodimer.

It catalyses the reaction 3-dehydroquinate = 3-dehydroshikimate + H2O. It participates in metabolic intermediate biosynthesis; chorismate biosynthesis; chorismate from D-erythrose 4-phosphate and phosphoenolpyruvate: step 3/7. In terms of biological role, involved in the third step of the chorismate pathway, which leads to the biosynthesis of aromatic amino acids. Catalyzes the cis-dehydration of 3-dehydroquinate (DHQ) and introduces the first double bond of the aromatic ring to yield 3-dehydroshikimate. The sequence is that of 3-dehydroquinate dehydratase from Methanosarcina mazei (strain ATCC BAA-159 / DSM 3647 / Goe1 / Go1 / JCM 11833 / OCM 88) (Methanosarcina frisia).